The chain runs to 144 residues: Large ribosomal subunit protein uL16 (144 aa).

Positions 1–16 (MLIPKRVKYRKQHRGR) are enriched in basic residues. The segment at 1 to 23 (MLIPKRVKYRKQHRGRPGGGMAK) is disordered.

Belongs to the universal ribosomal protein uL16 family. As to quaternary structure, part of the 50S ribosomal subunit.

Its function is as follows. Binds 23S rRNA and is also seen to make contacts with the A and possibly P site tRNAs. In Pelotomaculum thermopropionicum (strain DSM 13744 / JCM 10971 / SI), this protein is Large ribosomal subunit protein uL16.